Consider the following 179-residue polypeptide: NAD(P)H-quinone oxidoreductase subunit I, chloroplastic (179 aa).

2 4Fe-4S ferredoxin-type domains span residues 55 to 84 (GRIH…VDWR) and 95 to 124 (LNYS…MTEE). The [4Fe-4S] cluster site is built by Cys64, Cys67, Cys70, Cys74, Cys104, Cys107, Cys110, and Cys114.

It belongs to the complex I 23 kDa subunit family. As to quaternary structure, NDH is composed of at least 16 different subunits, 5 of which are encoded in the nucleus. [4Fe-4S] cluster serves as cofactor.

It localises to the plastid. The protein resides in the chloroplast thylakoid membrane. It carries out the reaction a plastoquinone + NADH + (n+1) H(+)(in) = a plastoquinol + NAD(+) + n H(+)(out). It catalyses the reaction a plastoquinone + NADPH + (n+1) H(+)(in) = a plastoquinol + NADP(+) + n H(+)(out). Its function is as follows. NDH shuttles electrons from NAD(P)H:plastoquinone, via FMN and iron-sulfur (Fe-S) centers, to quinones in the photosynthetic chain and possibly in a chloroplast respiratory chain. The immediate electron acceptor for the enzyme in this species is believed to be plastoquinone. Couples the redox reaction to proton translocation, and thus conserves the redox energy in a proton gradient. The polypeptide is NAD(P)H-quinone oxidoreductase subunit I, chloroplastic (Acorus calamus (Sweet flag)).